The sequence spans 450 residues: ATP-dependent protease ATPase subunit HslU (450 aa).

ATP is bound by residues V29, 71-76, D261, E328, and R400; that span reads GVGKTE.

Belongs to the ClpX chaperone family. HslU subfamily. A double ring-shaped homohexamer of HslV is capped on each side by a ring-shaped HslU homohexamer. The assembly of the HslU/HslV complex is dependent on binding of ATP.

Its subcellular location is the cytoplasm. In terms of biological role, ATPase subunit of a proteasome-like degradation complex; this subunit has chaperone activity. The binding of ATP and its subsequent hydrolysis by HslU are essential for unfolding of protein substrates subsequently hydrolyzed by HslV. HslU recognizes the N-terminal part of its protein substrates and unfolds these before they are guided to HslV for hydrolysis. In Rickettsia prowazekii (strain Madrid E), this protein is ATP-dependent protease ATPase subunit HslU.